The sequence spans 257 residues: Urease accessory protein UreD 3 (257 aa).

Residues Met-1 to Pro-22 are disordered.

Belongs to the UreD family. UreD, UreF and UreG form a complex that acts as a GTP-hydrolysis-dependent molecular chaperone, activating the urease apoprotein by helping to assemble the nickel containing metallocenter of UreC. The UreE protein probably delivers the nickel.

Its subcellular location is the cytoplasm. Its function is as follows. Required for maturation of urease via the functional incorporation of the urease nickel metallocenter. The sequence is that of Urease accessory protein UreD 3 from Streptomyces griseus subsp. griseus (strain JCM 4626 / CBS 651.72 / NBRC 13350 / KCC S-0626 / ISP 5235).